The sequence spans 1489 residues: MDVNVGLSRLQSQAGAPVGTKGSNTRLAAKQRETLQAYDYLCRVDEAKKWIEECLGTDLGPTSTFEQSLRNGVVLALLVQKFQPDKLIKIFYSNELQFRHSDNINKFLDFIHGIGLPEIFHFELTDIYEGKNLPKVIYCIHALSYFLSMQDLAPPLIKSDENLSFTDEDVSIIVRRLRQSNVILPNFKALSADFMLRASPVSSRTPSPTRFPKHARFQTLNSSDSASIYSSPYTSPTLEFSKKDASARSDILKMHRRTKSATPSLEQFNEPYKQTLPSHSIEFEDSFFQPPSQKGHMQRSFLTTFSAPTRRREALFSTTSGLSQRSPVDEKIVNAIQACGRGVLVRLRLVDMLQSLVEQSSSVVLLQAVIRGYISRNTYRIRKKAYDELVNWVTSIQSISRAYLIRAQYRKVVLQEEATKSIQTLQSIIRGGFYRRKYHSLIERLDLFTPSFVLIQSSALGFLTRHAIVNMLDNLYNYIPLFNRMQSILRANMFRNEWSNFLDSVQSFPVSFHSICKGRLIRDSINRLNGSLLGELDNFIKLQNLSRGFMIRRAFKEKLEKLKASTSSFIALQAIVRAFLLRKNLESIYDSFQKSHLSVIKAQSLYRGFITRTKIDYCNDYLLKRLPDIVFMQSAVRAILLRDDVNYTEVQLDSFIPEIVLLQSLIRGYLSRNKFSRKLQNFHKNMENPIVAKSIFRGRQEGLAYRELATAKNPPVMTVKNFVHLLDDTNFDFEEEVLLEKMRKEIVQQVRDNEEIEVHINELDVKIALLVKNKISLDDVLKHHNKYKFGKQSTEYLKINTLSMKSLNNSSRKFLELYQCFFYVLQTNEMYLANYFQALKTEGTSSVKIRHAVYLVLQIFGHGSNRREEVLLLRFISQVIKLEAALVNSSQDLLSDDCVWKLLFTGYRGDVREVKLWKTILGRIHKVLVADNHLDFEINPLTLFKSFNPEVASQTDSPKLTLSLAMQHPPTRNLYVSRLRELRKLCQSFLVALSKNIENIPYALCYTAAQLKNSLQRYFPAAHKEEIFGVIGKFVYWAYVAPVLVSPDNFKLVDGSITALQRKNLYTLSSILSEIFSIESCDSKQLGFFRPLSEFIEVSKQDTMLMLERLVDVVDPEVYFEFDAFEDLVNTKRPVIYMKRDDILGIYSSIAYVIDSIAPPDVNDPLRAVVNSLGPVSEQDNDFVQDETDVKLELNPKFCTIENPVAQERTLIVQTKRYILFIIRIQNGLNLLEILVKPVTDSDEAAWQNLLAEESEKNARNYDLFDDSIFSMSFAELKYTALSNIVEMEKLGFANRRNNYQDMVNSIALDIRNKSRRRMQRQRELDAGHQSLLNLREKRAFLDSQLKSYNEYIEQAMETLQSKKGKKKLIPFSKQYFHMRDLRKSGRVPRFGSFKYPALKLYDRGVLVSISHMPQKEKLYITISADEVGKFILEATSPTVKVSSPRCELHLDDLLSAQYNKVLTLDVLDGRLKLNTNMFLHLIFSKFYS.

The Calponin-homology (CH) domain maps to 41 to 147; sequence LCRVDEAKKW…YCIHALSYFL (107 aa). IQ domains lie at 359 to 388, 389 to 418, 418 to 449, 535 to 564, 565 to 594, and 655 to 684; these read QSSS…AYDE, LVNW…QEEA, ATKS…DLFT, ELDN…KLKA, STSS…SFQK, and FIPE…NFHK. Positions 734–770 form a coiled coil; sequence EEEVLLEKMRKEIVQQVRDNEEIEVHINELDVKIALL. A Ras-GAP domain is found at 870-1110; the sequence is VLLLRFISQV…QDTMLMLERL (241 aa). A coiled-coil region spans residues 1330 to 1364; it reads QSLLNLREKRAFLDSQLKSYNEYIEQAMETLQSKK.

Interacts with calmodulin cam1.

It localises to the cytoplasm. It is found in the cytoskeleton. The protein localises to the nucleus envelope. Its subcellular location is the microtubule organizing center. The protein resides in the spindle pole body. Its function is as follows. Component of the contractile F-actin ring; required for its construction following assembly of F-actin at the division site. This Schizosaccharomyces pombe (strain 972 / ATCC 24843) (Fission yeast) protein is Ras GTPase-activating-like protein rng2.